A 476-amino-acid polypeptide reads, in one-letter code: Glucose-1-phosphate adenylyltransferase (476 aa).

Alpha-D-glucose 1-phosphate is bound by residues Y114, G179, 194–195 (EK), and S212.

It belongs to the bacterial/plant glucose-1-phosphate adenylyltransferase family. As to quaternary structure, homotetramer.

It catalyses the reaction alpha-D-glucose 1-phosphate + ATP + H(+) = ADP-alpha-D-glucose + diphosphate. Its pathway is glycan biosynthesis; glycogen biosynthesis. In terms of biological role, involved in the biosynthesis of ADP-glucose, a building block required for the elongation reactions to produce glycogen. Catalyzes the reaction between ATP and alpha-D-glucose 1-phosphate (G1P) to produce pyrophosphate and ADP-Glc. The sequence is that of Glucose-1-phosphate adenylyltransferase from Yersinia pestis bv. Antiqua (strain Antiqua).